The chain runs to 698 residues: SHC SH2 domain-binding protein 1 homolog B (698 aa).

3 PbH1 repeats span residues Cys-480–Pro-502, Gly-503–Asp-524, and Ile-532–Lys-554.

The protein resides in the midbody. The protein localises to the cytoplasm. Its subcellular location is the cytoskeleton. It is found in the spindle. May play a role in signaling pathways governing cellular proliferation. This chain is SHC SH2 domain-binding protein 1 homolog B (shcbp1-b), found in Xenopus laevis (African clawed frog).